Consider the following 357-residue polypeptide: Peptide chain release factor 1 (357 aa).

Q235 is modified (N5-methylglutamine).

Belongs to the prokaryotic/mitochondrial release factor family. Methylated by PrmC. Methylation increases the termination efficiency of RF1.

The protein resides in the cytoplasm. In terms of biological role, peptide chain release factor 1 directs the termination of translation in response to the peptide chain termination codons UAG and UAA. This is Peptide chain release factor 1 from Alkaliphilus metalliredigens (strain QYMF).